An 87-amino-acid polypeptide reads, in one-letter code: Probable Fe(2+)-trafficking protein (87 aa).

Belongs to the Fe(2+)-trafficking protein family.

Could be a mediator in iron transactions between iron acquisition and iron-requiring processes, such as synthesis and/or repair of Fe-S clusters in biosynthetic enzymes. The sequence is that of Probable Fe(2+)-trafficking protein from Francisella tularensis subsp. holarctica (strain FTNF002-00 / FTA).